The following is a 173-amino-acid chain: Protein TraS (173 aa).

It localises to the cell inner membrane. Involved in surface exclusion. The protein is Protein TraS (traS) of Escherichia coli (strain K12).